The primary structure comprises 312 residues: tRNA pseudouridine synthase B (312 aa).

The Nucleophile role is filled by Asp-46. Substrate-binding residues include Tyr-74, Tyr-177, and Leu-198.

It belongs to the pseudouridine synthase TruB family. Type 1 subfamily.

It carries out the reaction uridine(55) in tRNA = pseudouridine(55) in tRNA. In terms of biological role, responsible for synthesis of pseudouridine from uracil-55 in the psi GC loop of transfer RNAs. This is tRNA pseudouridine synthase B from Buchnera aphidicola subsp. Schizaphis graminum (strain Sg).